The chain runs to 820 residues: Probable protease Ga0182885_104520 (820 aa).

It belongs to the peptidase C25 family.

Its function is as follows. Probably a dedicated protease for substrate gasdermin bGSDM; cleaves the bGSDM precursor, releasing the pore-forming moiety, which integrates into the membrane and triggers cell death. Involved in defense against bacteriophages. Expression of bacterial gasdermin (bGSDM) and this neighboring protease is toxic in E.coli. This chain is Probable protease Ga0182885_104520, found in Desulfuromonadales bacterium.